Here is a 491-residue protein sequence, read N- to C-terminus: Inositol-pentakisphosphate 2-kinase (491 aa).

Residues 136 to 140 (EIKPK) carry the EXKPK motif motif. Ser-282 carries the phosphoserine modification.

Belongs to the IPK1 type 2 family. In terms of tissue distribution, ubiquitously expressed, with high expression in heart, brain, testis and placenta.

It is found in the cytoplasm. The protein resides in the nucleus. The catalysed reaction is 1D-myo-inositol 1,3,4,5,6-pentakisphosphate + ATP = 1D-myo-inositol hexakisphosphate + ADP + H(+). Functionally, phosphorylates Ins(1,3,4,5,6)P5 at position 2 to form Ins(1,2,3,4,5,6)P6 (InsP6 or phytate). InsP6 is involved in many processes such as mRNA export, non-homologous end-joining, endocytosis, ion channel regulation. It also protects cells from TNF-alpha-induced apoptosis. The protein is Inositol-pentakisphosphate 2-kinase (IPPK) of Homo sapiens (Human).